Here is a 249-residue protein sequence, read N- to C-terminus: Salivary antigen-5 (249 aa).

The first 26 residues, 1–26, serve as a signal peptide directing secretion; that stretch reads MAKTQCPLVFSLLALALIGTLQSSAA. The SCP domain occupies 50–193; it reads SIHNYYRNLT…WYAGYLVCNY (144 aa). Residues Asn-57, Asn-127, and Asn-168 are each glycosylated (N-linked (GlcNAc...) asparagine).

It belongs to the CRISP family. Venom allergen 5-like subfamily. In terms of assembly, monomeric in solution. Requires Cu(2+) as cofactor. Saliva (at protein level). Salivary gland (at protein level).

It localises to the secreted. Functionally, antioxidant protein that scavenges superoxide radicals. Removes superoxide radicals produced by PMA-stimulated host neutrophils. Inhibits host platelet aggregation induced by low doses of collagen by interfering with the pro-aggregatory properties of reactive oxygen species on platelets. Binds to heparin and sulfated glycosaminoglycans. The polypeptide is Salivary antigen-5 (Dipetalogaster maximus (Blood-sucking bug)).